The following is a 405-amino-acid chain: Transposase from transposon Tn1545 (405 aa).

The 85-residue stretch at 79–163 (GKKMTLCQLY…SLKASFYIAI (85 aa)) folds into the Core-binding (CB) domain. A Tyr recombinase domain is found at 186–392 (VPKTVLTEEQ…TFDSAMAEMK (207 aa)). Active-site residues include Arg225, Lys264, His343, Arg346, and His369. The active-site O-(3'-phospho-DNA)-tyrosine intermediate is Tyr379.

It belongs to the 'phage' integrase family.

The chain is Transposase from transposon Tn1545 (int) from Streptococcus agalactiae serotype V (strain ATCC BAA-611 / 2603 V/R).